The chain runs to 393 residues: NAD(P)H-quinone oxidoreductase subunit H, chloroplastic (393 aa).

This sequence belongs to the complex I 49 kDa subunit family. In terms of assembly, NDH is composed of at least 16 different subunits, 5 of which are encoded in the nucleus.

The protein resides in the plastid. The protein localises to the chloroplast thylakoid membrane. The catalysed reaction is a plastoquinone + NADH + (n+1) H(+)(in) = a plastoquinol + NAD(+) + n H(+)(out). It carries out the reaction a plastoquinone + NADPH + (n+1) H(+)(in) = a plastoquinol + NADP(+) + n H(+)(out). Its function is as follows. NDH shuttles electrons from NAD(P)H:plastoquinone, via FMN and iron-sulfur (Fe-S) centers, to quinones in the photosynthetic chain and possibly in a chloroplast respiratory chain. The immediate electron acceptor for the enzyme in this species is believed to be plastoquinone. Couples the redox reaction to proton translocation, and thus conserves the redox energy in a proton gradient. The polypeptide is NAD(P)H-quinone oxidoreductase subunit H, chloroplastic (Ceratophyllum demersum (Rigid hornwort)).